The primary structure comprises 161 residues: Nucleotide-binding protein GM21_0633 (161 aa).

This sequence belongs to the YajQ family.

Nucleotide-binding protein. The protein is Nucleotide-binding protein GM21_0633 of Geobacter sp. (strain M21).